The sequence spans 274 residues: NADPH-dependent 7-cyano-7-deazaguanine reductase (274 aa).

80–82 lines the substrate pocket; sequence VES. Residue 82 to 83 coordinates NADPH; the sequence is SK. Cysteine 181 acts as the Thioimide intermediate in catalysis. Aspartate 188 (proton donor) is an active-site residue. 220 to 221 is a binding site for substrate; sequence HE. Position 249–250 (249–250) interacts with NADPH; it reads RG.

It belongs to the GTP cyclohydrolase I family. QueF type 2 subfamily. In terms of assembly, homodimer.

It is found in the cytoplasm. It carries out the reaction 7-aminomethyl-7-carbaguanine + 2 NADP(+) = 7-cyano-7-deazaguanine + 2 NADPH + 3 H(+). It participates in tRNA modification; tRNA-queuosine biosynthesis. Catalyzes the NADPH-dependent reduction of 7-cyano-7-deazaguanine (preQ0) to 7-aminomethyl-7-deazaguanine (preQ1). In Burkholderia ambifaria (strain MC40-6), this protein is NADPH-dependent 7-cyano-7-deazaguanine reductase.